The primary structure comprises 119 residues: Large ribosomal subunit protein bL20 (119 aa).

This sequence belongs to the bacterial ribosomal protein bL20 family.

Its function is as follows. Binds directly to 23S ribosomal RNA and is necessary for the in vitro assembly process of the 50S ribosomal subunit. It is not involved in the protein synthesizing functions of that subunit. This chain is Large ribosomal subunit protein bL20, found in Alkaliphilus oremlandii (strain OhILAs) (Clostridium oremlandii (strain OhILAs)).